Reading from the N-terminus, the 219-residue chain is Large ribosomal subunit protein uL3 (219 aa).

The segment at 134 to 153 (RASHGNSRSHNVPGSIGMAQ) is disordered. The residue at position 153 (Gln153) is an N5-methylglutamine.

The protein belongs to the universal ribosomal protein uL3 family. As to quaternary structure, part of the 50S ribosomal subunit. Forms a cluster with proteins L14 and L19. Post-translationally, methylated by PrmB.

Functionally, one of the primary rRNA binding proteins, it binds directly near the 3'-end of the 23S rRNA, where it nucleates assembly of the 50S subunit. This chain is Large ribosomal subunit protein uL3, found in Paraburkholderia phytofirmans (strain DSM 17436 / LMG 22146 / PsJN) (Burkholderia phytofirmans).